Reading from the N-terminus, the 287-residue chain is Acetyl-coenzyme A carboxylase carboxyl transferase subunit beta (287 aa).

The CoA carboxyltransferase N-terminal domain maps to 25–287 (VWTKCSACEQ…KMLNTHVIEE (263 aa)). C29, C32, C48, and C51 together coordinate Zn(2+). The C4-type zinc-finger motif lies at 29–51 (CSACEQVLYRAELERNLEVCPKC).

Belongs to the AccD/PCCB family. As to quaternary structure, acetyl-CoA carboxylase is a heterohexamer composed of biotin carboxyl carrier protein (AccB), biotin carboxylase (AccC) and two subunits each of ACCase subunit alpha (AccA) and ACCase subunit beta (AccD). Zn(2+) is required as a cofactor.

It is found in the cytoplasm. It catalyses the reaction N(6)-carboxybiotinyl-L-lysyl-[protein] + acetyl-CoA = N(6)-biotinyl-L-lysyl-[protein] + malonyl-CoA. It functions in the pathway lipid metabolism; malonyl-CoA biosynthesis; malonyl-CoA from acetyl-CoA: step 1/1. Component of the acetyl coenzyme A carboxylase (ACC) complex. Biotin carboxylase (BC) catalyzes the carboxylation of biotin on its carrier protein (BCCP) and then the CO(2) group is transferred by the transcarboxylase to acetyl-CoA to form malonyl-CoA. The polypeptide is Acetyl-coenzyme A carboxylase carboxyl transferase subunit beta (Aeromonas hydrophila subsp. hydrophila (strain ATCC 7966 / DSM 30187 / BCRC 13018 / CCUG 14551 / JCM 1027 / KCTC 2358 / NCIMB 9240 / NCTC 8049)).